Reading from the N-terminus, the 555-residue chain is Glucose-6-phosphate isomerase (555 aa).

Residue Glu353 is the Proton donor of the active site. Catalysis depends on residues His384 and Lys516.

This sequence belongs to the GPI family.

The protein localises to the cytoplasm. It catalyses the reaction alpha-D-glucose 6-phosphate = beta-D-fructose 6-phosphate. Its pathway is carbohydrate biosynthesis; gluconeogenesis. The protein operates within carbohydrate degradation; glycolysis; D-glyceraldehyde 3-phosphate and glycerone phosphate from D-glucose: step 2/4. In terms of biological role, catalyzes the reversible isomerization of glucose-6-phosphate to fructose-6-phosphate. The polypeptide is Glucose-6-phosphate isomerase (Methylobacillus flagellatus (strain ATCC 51484 / DSM 6875 / VKM B-1610 / KT)).